Here is a 257-residue protein sequence, read N- to C-terminus: Hydroxyacylglutathione hydrolase (257 aa).

7 residues coordinate Zn(2+): histidine 53, histidine 55, aspartate 57, histidine 58, histidine 109, aspartate 126, and histidine 164.

This sequence belongs to the metallo-beta-lactamase superfamily. Glyoxalase II family. Monomer. Requires Zn(2+) as cofactor.

It catalyses the reaction an S-(2-hydroxyacyl)glutathione + H2O = a 2-hydroxy carboxylate + glutathione + H(+). The protein operates within secondary metabolite metabolism; methylglyoxal degradation; (R)-lactate from methylglyoxal: step 2/2. Functionally, thiolesterase that catalyzes the hydrolysis of S-D-lactoyl-glutathione to form glutathione and D-lactic acid. In Baumannia cicadellinicola subsp. Homalodisca coagulata, this protein is Hydroxyacylglutathione hydrolase.